The sequence spans 630 residues: PR domain zinc finger protein 5 (630 aa).

The region spanning 8–124 is the SET domain; that stretch reads DRFSLKSSRV…TDTELLIGYL (117 aa). Residues 167–190 form a C2H2-type 1 zinc finger; sequence YACPQCESSFTSEDILAEHLQTLH. A C2H2-type 2; atypical zinc finger spans residues 199–221; sequence FKCKNCGKKFPVKQALQRHVLQC. The C2H2-type 3; atypical zinc finger occupies 234-256; that stretch reads FQCSVCNSSFSSASSFEQHQETC. 13 consecutive C2H2-type zinc fingers follow at residues 262-287, 295-317, 320-342, 348-370, 376-398, 404-426, 432-455, 461-483, 489-511, 517-539, 545-567, 573-595, and 602-625; these read FVCK…ENVH, LICS…RKIH, FDCQ…MITH, YNCE…KVIH, YKCK…KKTH, FQCE…LLIH, FKCH…QVVH, YRCE…KKTH, KICP…IRSH, YQCP…IRTH, YKCS…KRTH, FQCD…KMTH, and AECQ…DNIH.

It belongs to the class V-like SAM-binding methyltransferase superfamily. Interacts with EHMT2/G9A, GFI1 and HDAC1. Widely expressed with highest levels in colon and ovary. Tends to be silenced in breast, colorectal, gastric and liver cancer tissues.

The protein resides in the nucleus. Sequence-specific DNA-binding transcription factor. Represses transcription at least in part by recruitment of the histone methyltransferase EHMT2/G9A and histone deacetylases such as HDAC1. Regulates hematopoiesis-associated protein-coding and microRNA (miRNA) genes. May regulate the expression of proteins involved in extracellular matrix development and maintenance, including fibrillar collagens, such as COL4A1 and COL11A1, connective tissue components, such as HAPLN1, and molecules regulating cell migration and adhesion, including EDIL3 and TGFB2. May cause G2/M arrest and apoptosis in cancer cells. The protein is PR domain zinc finger protein 5 (PRDM5) of Homo sapiens (Human).